Reading from the N-terminus, the 121-residue chain is D-ornithine 4,5-aminomutase subunit alpha (121 aa).

As to quaternary structure, heterotetramer of 2 alpha (OraS) and 2 beta (OraE) subunits.

The enzyme catalyses D-ornithine = (2R,4S)-2,4-diaminopentanoate. With respect to regulation, increased activity in the presence of dithiothreitol (DTT) in vitro. Inhibited by 1 mM potassium phosphate and potassium chloride. Inhibited by L-alpha-ornithine, D,L-alpha-lysine, L-beta-lysine (50%-60%), L-alpha-lysine (26%) and by delta-amino-n-valeric acid to a lesser extent. Significant decrease in activity is observed in the presence of 0.2 mM p-chloromercuribenzoate, N-ethylmaleimide and also by 2 mM iodoacetate to a lesser extent but not inhibited by arsenite. Functionally, component of a complex that catalyzes the reversible migration of the omega amino group of D-ornithine to C-4 to form (2R,4S)-2,4-diaminopentanoic acid. The role of OraS remains obscure; however, it seems to be required for a correct folding of the OraE subunit. The complex is active only on D-ornithine and 2,4-diaminopentanoic acid and not active on L-ornithine, L-beta-lysine, L-alpha-lysine or D-alpha-lysine. The sequence is that of D-ornithine 4,5-aminomutase subunit alpha (oraS) from Acetoanaerobium sticklandii (strain ATCC 12662 / DSM 519 / JCM 1433 / CCUG 9281 / NCIMB 10654 / HF) (Clostridium sticklandii).